The following is a 126-amino-acid chain: Aspartate 1-decarboxylase (126 aa).

Catalysis depends on Ser25, which acts as the Schiff-base intermediate with substrate; via pyruvic acid. A Pyruvic acid (Ser) modification is found at Ser25. Residue Thr57 participates in substrate binding. Tyr58 acts as the Proton donor in catalysis. 73–75 (GAA) is a substrate binding site.

The protein belongs to the PanD family. In terms of assembly, heterooctamer of four alpha and four beta subunits. Pyruvate is required as a cofactor. In terms of processing, is synthesized initially as an inactive proenzyme, which is activated by self-cleavage at a specific serine bond to produce a beta-subunit with a hydroxyl group at its C-terminus and an alpha-subunit with a pyruvoyl group at its N-terminus.

The protein localises to the cytoplasm. It catalyses the reaction L-aspartate + H(+) = beta-alanine + CO2. It participates in cofactor biosynthesis; (R)-pantothenate biosynthesis; beta-alanine from L-aspartate: step 1/1. Catalyzes the pyruvoyl-dependent decarboxylation of aspartate to produce beta-alanine. This Edwardsiella ictaluri (strain 93-146) protein is Aspartate 1-decarboxylase.